A 478-amino-acid chain; its full sequence is Islet cell autoantigen 1 (478 aa).

Residues 50–253 enclose the AH domain; sequence ASDADLDAKL…TSHTMAAIHE (204 aa). Over residues 306 to 317 the composition is skewed to basic and acidic residues; it reads EHKDSSAYKTEE. Disordered stretches follow at residues 306 to 365 and 398 to 422; these read EHKD…SGDK and LKEP…GFLP.

As to expression, predominantly expressed in brain, pancreas and stomach mucosa. High expression also found in stomach muscle and testis.

The protein resides in the cytoplasm. The protein localises to the cytosol. It is found in the golgi apparatus membrane. It localises to the cytoplasmic vesicle. Its subcellular location is the secretory vesicle membrane. The protein resides in the secretory vesicle. The protein localises to the synaptic vesicle membrane. Functionally, may play a role in neurotransmitter secretion. This chain is Islet cell autoantigen 1, found in Mus musculus (Mouse).